Consider the following 509-residue polypeptide: Methionine--tRNA ligase (509 aa).

The 'HIGH' region motif lies at tyrosine 12–histidine 22. Positions lysine 295–serine 299 match the 'KMSKS' region motif. Lysine 298 provides a ligand contact to ATP.

It belongs to the class-I aminoacyl-tRNA synthetase family. MetG type 2B subfamily. Monomer.

It localises to the cytoplasm. It carries out the reaction tRNA(Met) + L-methionine + ATP = L-methionyl-tRNA(Met) + AMP + diphosphate. In terms of biological role, is required not only for elongation of protein synthesis but also for the initiation of all mRNA translation through initiator tRNA(fMet) aminoacylation. This is Methionine--tRNA ligase from Rickettsia bellii (strain RML369-C).